The following is a 451-amino-acid chain: MENELFLQKQNFLVLGLAKSGYAAASILHEKGINVVVNDQKAFEENEPAQRLAERGIEVICGEHPTSLFDQHHITILIKNPGIPYENIMVEEAQRRGIPVWTEIELAYYITNAKFIGITGSNGKTTTTTLIYEMLKADSIKTLIAGNIGTVASEVAYHADGDEWIVTELSSFQLMGTHAFRPEIGLILNVFDAHLDYHHSRENYEKAKQNVYLHQLESDTAIVNQSDETVVRLAESGKAGTVPFSVHQELSSGAFIKDGMLMFGDEAILPVDDIVLPGAHNLENILAAVAAAKTAGASNKAIQKVLTSFTGVKHRLQYVTAIQNRKFYNDSKATNILATSKALSAFKAPVILLAGGLDRGNGFDDLKPYMDNVKAVLTFGQTAPKIEKLGNELGIQHVKRVDNVEQAVSAAFALSNEGDVILLSPACASWDQFKTFEERGDMFIDAVHMLK.

Residue 120-126 (GSNGKTT) participates in ATP binding.

It belongs to the MurCDEF family.

Its subcellular location is the cytoplasm. The enzyme catalyses UDP-N-acetyl-alpha-D-muramoyl-L-alanine + D-glutamate + ATP = UDP-N-acetyl-alpha-D-muramoyl-L-alanyl-D-glutamate + ADP + phosphate + H(+). Its pathway is cell wall biogenesis; peptidoglycan biosynthesis. In terms of biological role, cell wall formation. Catalyzes the addition of glutamate to the nucleotide precursor UDP-N-acetylmuramoyl-L-alanine (UMA). The chain is UDP-N-acetylmuramoylalanine--D-glutamate ligase from Bacillus velezensis (strain DSM 23117 / BGSC 10A6 / LMG 26770 / FZB42) (Bacillus amyloliquefaciens subsp. plantarum).